A 139-amino-acid polypeptide reads, in one-letter code: Acyl carrier protein 5, chloroplastic (139 aa).

The N-terminal 54 residues, 1-54 (MATSFCSSISMQAPFSATTTRFCLNKQATIFNNEKTNNLSFSLRRLMPARLAVS), are a transit peptide targeting the chloroplast. Residues 59-134 (QETVEKVSEI…QAAELIEELV (76 aa)) enclose the Carrier domain. Ser94 is subject to O-(pantetheine 4'-phosphoryl)serine.

This sequence belongs to the acyl carrier protein (ACP) family. In terms of processing, 4'-phosphopantetheine is transferred from CoA to a specific serine of apo-ACP by acpS. This modification is essential for activity because fatty acids are bound in thioester linkage to the sulfhydryl of the prosthetic group.

The protein resides in the plastid. Its subcellular location is the chloroplast. In terms of biological role, carrier of the growing fatty acid chain in fatty acid biosynthesis. This Arabidopsis thaliana (Mouse-ear cress) protein is Acyl carrier protein 5, chloroplastic (ACP5).